The sequence spans 252 residues: Probable transcriptional regulatory protein Haur_3030 (252 aa).

Belongs to the TACO1 family.

It is found in the cytoplasm. This chain is Probable transcriptional regulatory protein Haur_3030, found in Herpetosiphon aurantiacus (strain ATCC 23779 / DSM 785 / 114-95).